Consider the following 76-residue polypeptide: Exodeoxyribonuclease 7 small subunit (76 aa).

It belongs to the XseB family. Heterooligomer composed of large and small subunits.

The protein localises to the cytoplasm. It catalyses the reaction Exonucleolytic cleavage in either 5'- to 3'- or 3'- to 5'-direction to yield nucleoside 5'-phosphates.. In terms of biological role, bidirectionally degrades single-stranded DNA into large acid-insoluble oligonucleotides, which are then degraded further into small acid-soluble oligonucleotides. The protein is Exodeoxyribonuclease 7 small subunit of Geotalea uraniireducens (strain Rf4) (Geobacter uraniireducens).